We begin with the raw amino-acid sequence, 159 residues long: Ribosomal RNA large subunit methyltransferase H (159 aa).

S-adenosyl-L-methionine-binding positions include Leu-76, Gly-108, and Phe-127–Leu-132.

The protein belongs to the RNA methyltransferase RlmH family. Homodimer.

It is found in the cytoplasm. The catalysed reaction is pseudouridine(1915) in 23S rRNA + S-adenosyl-L-methionine = N(3)-methylpseudouridine(1915) in 23S rRNA + S-adenosyl-L-homocysteine + H(+). In terms of biological role, specifically methylates the pseudouridine at position 1915 (m3Psi1915) in 23S rRNA. The chain is Ribosomal RNA large subunit methyltransferase H from Listeria monocytogenes serotype 4b (strain CLIP80459).